The primary structure comprises 191 residues: Cdc42 homolog (191 aa).

A GTP-binding site is contributed by 10–17 (GDGAVGKT). An Effector region motif is present at residues 32–40 (YVPTVFDNY). Residues 57-61 (DTAGQ) and 115-118 (TQID) each bind GTP. Cys188 is subject to Cysteine methyl ester. A lipid anchor (S-geranylgeranyl cysteine) is attached at Cys188. Positions 189 to 191 (KFL) are cleaved as a propeptide — removed in mature form.

Belongs to the small GTPase superfamily. Rho family. CDC42 subfamily.

Its subcellular location is the cell junction. The protein localises to the adherens junction. It localises to the cell membrane. The enzyme catalyses GTP + H2O = GDP + phosphate + H(+). Regulates mbt kinase activity and is also required to recruit mbt to adherens junctions. Together with mbt, regulates photoreceptor cell morphogenesis. The sequence is that of Cdc42 homolog from Drosophila pseudoobscura pseudoobscura (Fruit fly).